Reading from the N-terminus, the 458-residue chain is MDFTFDSDDNKNAVIKVIGVGGAGGNAVNRMIDEGVQGVSFIAANTDVQALNSNKAENKIQLGPKLTRGLGAGSHPEVGQKAAEESQQTIEDSLKGADMIFITAGMGGGTGTGAAPVIAKIARETGALTVGVVTRPFTFEGPKRSKNAAEGIAQLKQYVDTLVIIANNRLLEMVDKKTPMMDAFKEADNVLRQGVQGISDLITSTDYVNLDFADVKTVMENQGAALMGIGRASGENRTVEATKLAISSPLLEVSIDGAKQVLLNITGGPDLTLFEAQDASDIVSKAAGDGVNIIFGTSINANLGDEVVVTVIATGIDSKAEEEASKQPMRRPSRPARQEVVTPEPTKSEQPEVSKAASVDDTEVKVANTISHEAPTQSIPEVKAEKKESQDTLLDPTSVWKQDRKENNRPQPVENKEKDDDEFDSFSSDDSTSISQIETSVDDESDNDIPFFKHRRQD.

GTP-binding positions include 22–26 (GAGGN), 109–111 (GTG), E140, R144, and D188. The interval 319–458 (KAEEEASKQP…IPFFKHRRQD (140 aa)) is disordered. Over residues 368–379 (NTISHEAPTQSI) the composition is skewed to polar residues. Residues 401-418 (KQDRKENNRPQPVENKEK) are compositionally biased toward basic and acidic residues. Residues 425–439 (SFSSDDSTSISQIET) are compositionally biased toward low complexity.

It belongs to the FtsZ family. In terms of assembly, homodimer. Polymerizes to form a dynamic ring structure in a strictly GTP-dependent manner. Interacts directly with several other division proteins.

It is found in the cytoplasm. Functionally, essential cell division protein that forms a contractile ring structure (Z ring) at the future cell division site. The regulation of the ring assembly controls the timing and the location of cell division. One of the functions of the FtsZ ring is to recruit other cell division proteins to the septum to produce a new cell wall between the dividing cells. Binds GTP and shows GTPase activity. The chain is Cell division protein FtsZ from Lactobacillus johnsonii (strain CNCM I-12250 / La1 / NCC 533).